We begin with the raw amino-acid sequence, 505 residues long: Cytochrome P450 76A2 (505 aa).

Cysteine 448 serves as a coordination point for heme.

It belongs to the cytochrome P450 family. Heme is required as a cofactor.

In Solanum melongena (Eggplant), this protein is Cytochrome P450 76A2 (CYP76A2).